A 279-amino-acid chain; its full sequence is QLHCAGKAKRSGSHAPLVRELLLDALSPEQLVLTLLEAEPPHVLISRPSAPFTEASMMMSLTKLADKELVHMISWAKKIPGFVELSLFDQVRLLESCWMEVLMVGLMWRSIDHPGKLIFAPDLVLDRDEGKCVEGILEIFDMLLATTSRFRELKLQHKEYLCVKAMILLNSNMYPLVTATQDADSSRKLAHLLNAVTDALVWVIAKSGISSQQQSMRLANLLMLLSHVRHASNKGMEHLLSMKCKNVVPVYDLLLEMLNAHVLRGCKSSITGSECSPAE.

The region spanning 27 to 261 (SPEQLVLTLL…DLLLEMLNAH (235 aa)) is the NR LBD domain.

It belongs to the nuclear hormone receptor family. NR3 subfamily. As to quaternary structure, binds DNA as a homodimer. Can form a heterodimer with ESR1. Interacts with NCOA1, NCOA3, NCOA5 and NCOA6 coactivators, leading to a strong increase of transcription of target genes. Interacts with UBE1C and AKAP13. Interacts with DNTTIP2. Interacts with CCDC62 in the presence of estradiol/E2; this interaction seems to enhance the transcription of target genes. Interacts with DNAAF4. Interacts with PRMT2. Interacts with CCAR2 (via N-terminus) in a ligand-independent manner. Interacts with RBM39, in the presence of estradiol (E2). Interacts with STUB1/CHIP.

It localises to the nucleus. Its function is as follows. Nuclear hormone receptor. Binds estrogens with an affinity similar to that of ESR1/ER-alpha, and activates expression of reporter genes containing estrogen response elements (ERE) in an estrogen-dependent manner. In Macaca mulatta (Rhesus macaque), this protein is Estrogen receptor beta (ESR2).